The following is a 1316-amino-acid chain: DNA-directed RNA polymerase subunit beta' (1316 aa).

The Zn(2+) site is built by Cys60, Cys62, Cys75, and Cys78. Mg(2+)-binding residues include Asp535, Asp537, and Asp539. Residues Cys891, Cys968, Cys975, and Cys978 each contribute to the Zn(2+) site.

Belongs to the RNA polymerase beta' chain family. The RNAP catalytic core consists of 2 alpha, 1 beta, 1 beta' and 1 omega subunit. When a sigma factor is associated with the core the holoenzyme is formed, which can initiate transcription. The cofactor is Mg(2+). Requires Zn(2+) as cofactor.

It catalyses the reaction RNA(n) + a ribonucleoside 5'-triphosphate = RNA(n+1) + diphosphate. Its function is as follows. DNA-dependent RNA polymerase catalyzes the transcription of DNA into RNA using the four ribonucleoside triphosphates as substrates. The chain is DNA-directed RNA polymerase subunit beta' from Mycobacterium bovis (strain BCG / Tokyo 172 / ATCC 35737 / TMC 1019).